The following is a 311-amino-acid chain: Methionyl-tRNA formyltransferase (311 aa).

110 to 113 is a (6S)-5,6,7,8-tetrahydrofolate binding site; it reads SLLP.

The protein belongs to the Fmt family.

The enzyme catalyses L-methionyl-tRNA(fMet) + (6R)-10-formyltetrahydrofolate = N-formyl-L-methionyl-tRNA(fMet) + (6S)-5,6,7,8-tetrahydrofolate + H(+). In terms of biological role, attaches a formyl group to the free amino group of methionyl-tRNA(fMet). The formyl group appears to play a dual role in the initiator identity of N-formylmethionyl-tRNA by promoting its recognition by IF2 and preventing the misappropriation of this tRNA by the elongation apparatus. The chain is Methionyl-tRNA formyltransferase from Streptococcus equi subsp. zooepidemicus (strain H70).